A 319-amino-acid polypeptide reads, in one-letter code: Alpha/beta-gliadin A-V (319 aa).

The N-terminal stretch at 1–20 is a signal peptide; it reads MKTFLILALLAIVATTATTA. Positions 28 to 58 are enriched in low complexity; that stretch reads LQPQNPSQQQPQEQVPLVQQQQFPGQQQQFP. Disordered stretches follow at residues 28–125 and 258–278; these read LQPQ…QQAQ and SQVS…VQPQ. 2 stretches are compositionally biased toward pro residues: residues 59-71 and 81-104; these read PQQP…PFPS and FPQP…PQQP. Residues 105–125 show a composition bias toward low complexity; that stretch reads YPQQQPQYLQPQQPISQQQAQ. Polar residues predominate over residues 267–278; the sequence is LNPQAQGSVQPQ.

This sequence belongs to the gliadin/glutenin family. In terms of processing, substrate of transglutaminase.

Gliadin is the major seed storage protein in wheat. The polypeptide is Alpha/beta-gliadin A-V (Triticum aestivum (Wheat)).